Here is a 592-residue protein sequence, read N- to C-terminus: Beta-fructofuranosidase, insoluble isoenzyme 1 (592 aa).

The first 39 residues, 1 to 39 (MGVTIRNRNYDHGSLPFLQSLLAILLVTTTTLHINGVEA), serve as a signal peptide directing secretion. A propeptide spanning residues 40 to 48 (FHEIHYNLQ) is cleaved from the precursor. D74 is an active-site residue. The N-linked (GlcNAc...) (complex) asparagine glycan is linked to N170. A glycan (N-linked (GlcNAc...) asparagine) is linked at N195. The N-linked (GlcNAc...) (complex) asparagine glycan is linked to N311. A glycan (N-linked (GlcNAc...) (high mannose) asparagine) is linked at N348. Residue N570 is glycosylated (N-linked (GlcNAc...) asparagine).

Belongs to the glycosyl hydrolase 32 family. In terms of tissue distribution, in leaves and roots of young plants.

Its subcellular location is the secreted. It localises to the cell wall. It catalyses the reaction Hydrolysis of terminal non-reducing beta-D-fructofuranoside residues in beta-D-fructofuranosides.. May play an important role in phloem unloading and in stress response. This is Beta-fructofuranosidase, insoluble isoenzyme 1 (INV1) from Daucus carota (Wild carrot).